The following is a 259-amino-acid chain: Glycerol-3-phosphate acyltransferase (259 aa).

Helical transmembrane passes span 11–31, 62–82, 93–112, 124–144, 152–172, 188–208, and 211–231; these read IILASVVGYFLGSISWSIIIV, LVVAFLDALKVIFTSIIAILL, TSYFIPCIFALIGHCFPIYY, LGLLFVVNILYLIIFLIVWFI, VSVASIFSAFFVLIIMWIPYL, FSVAWKNYILFSLLNSFHYWF, and IWASGMLEGNIIVLIGGLILG.

The protein belongs to the PlsY family. Probably interacts with PlsX.

The protein localises to the cell membrane. The enzyme catalyses an acyl phosphate + sn-glycerol 3-phosphate = a 1-acyl-sn-glycero-3-phosphate + phosphate. The protein operates within lipid metabolism; phospholipid metabolism. Functionally, catalyzes the transfer of an acyl group from acyl-phosphate (acyl-PO(4)) to glycerol-3-phosphate (G3P) to form lysophosphatidic acid (LPA). This enzyme utilizes acyl-phosphate as fatty acyl donor, but not acyl-CoA or acyl-ACP. This chain is Glycerol-3-phosphate acyltransferase, found in Mycoplasma capricolum subsp. capricolum (strain California kid / ATCC 27343 / NCTC 10154).